Reading from the N-terminus, the 122-residue chain is Large ribosomal subunit protein uL14c (122 aa).

It belongs to the universal ribosomal protein uL14 family. Part of the 50S ribosomal subunit.

The protein resides in the plastid. The protein localises to the chloroplast. Functionally, binds to 23S rRNA. This is Large ribosomal subunit protein uL14c from Huperzia lucidula (Shining clubmoss).